The sequence spans 121 residues: uncharacterized protein (121 aa).

Disordered stretches follow at residues 38–76 and 91–121; these read NQMAQKRNKQSKKPKQTSKGVKKSSKQNKNSSKNNKYQQ and SVLRSAHNSGSKMSDISNSIQLLSMTKKQEN. A compositionally biased stretch (basic residues) spans 43-63; sequence KRNKQSKKPKQTSKGVKKSSK. The segment covering 64 to 76 has biased composition (low complexity); the sequence is QNKNSSKNNKYQQ.

This is an uncharacterized protein from Schizosaccharomyces pombe (strain 972 / ATCC 24843) (Fission yeast).